We begin with the raw amino-acid sequence, 321 residues long: Protein FAM110C (321 aa).

Disordered regions lie at residues 1 to 84 and 111 to 203; these read MRAL…APAP and RGSG…SQSD. Basic and acidic residues-rich tracts occupy residues 15 to 46 and 131 to 145; these read LLPR…DRAK and GKDK…DEGK. Positions 169–181 are enriched in low complexity; that stretch reads APAARSAAPSSVP. Ser241 bears the Phosphoserine mark.

This sequence belongs to the FAM110 family. As to quaternary structure, interacts with AKT1; the interaction is transient and follows AKT1 activation. Interacts with PPP2CA and alpha-tubulin. Detected in stomach, thyroid, trachea, adrenal gland and testis, and at low levels in prostate, ovary, intestine, colon, spinal cord and lymph node.

It is found in the cytoplasm. It localises to the cytoskeleton. The protein localises to the microtubule organizing center. Its subcellular location is the centrosome. The protein resides in the spindle pole. It is found in the nucleus. May play a role in microtubule organization. May play a role in cell spreading and cell migration of epithelial cells; the function may involve the AKT1 signaling pathway. This Homo sapiens (Human) protein is Protein FAM110C (FAM110C).